Consider the following 378-residue polypeptide: Protein RecA (378 aa).

Position 65-72 (65-72 (GPESSGKT)) interacts with ATP. The tract at residues 325–378 (AYGMDQTGEEDDQADDKSKDKATKPSDKSQAQAKPKKPVATETSLDLDDSKTDK) is disordered. Over residues 339 to 351 (DDKSKDKATKPSD) the composition is skewed to basic and acidic residues.

The protein belongs to the RecA family.

The protein localises to the cytoplasm. In terms of biological role, can catalyze the hydrolysis of ATP in the presence of single-stranded DNA, the ATP-dependent uptake of single-stranded DNA by duplex DNA, and the ATP-dependent hybridization of homologous single-stranded DNAs. It interacts with LexA causing its activation and leading to its autocatalytic cleavage. The sequence is that of Protein RecA from Lactiplantibacillus pentosus (Lactobacillus pentosus).